We begin with the raw amino-acid sequence, 203 residues long: MAESFKEHLQEAFEDLGADNLRKFKSKLGDRRQEPRVTKSAIEKLKDEIDLADLMVGVFTSKDAVSVTVEILRAIKCNAVADDLLRNTGQSESKGALSDESKCASSKAVSKVAFSKVNFIDEHWKELIDRVNNVDPILDILRQKKVITNEDYCTIRNKETPQKKMRELLTGPITCAGNKGKEVLYDALRESNKFLMDDLEDAE.

The Pyrin domain occupies 1–91 (MAESFKEHLQ…DDLLRNTGQS (91 aa)). The 92-residue stretch at 112-203 (VAFSKVNFID…FLMDDLEDAE (92 aa)) folds into the CARD domain.

As to quaternary structure, self-associates (via pyrin and CARD domains). Interacts (via pyrin domain) with caspa (via pyrin domain). Interacts with caspb; the interaction only occurs in the presence of nlrp1. Component of NLRP1 inflammasomes. Inflammasomes are supramolecular complexes that assemble in the cytosol in response to pathogens and other damage-associated signals and play critical roles in innate immunity and inflammation. The NLRP1 inflammasome is composed of the signal sensor nlrp1, and the adapter pycard (asc), which recruit effector pro-inflammatory caspases caspa and/or caspb. The interaction between nlrp1 and pycard is required for the sequential recruitment of caspa and then caspb. Within the complex caspa is preferentially recruited first and this causes the cleavage of pro-il1b into the midformed il1b. This is followed by the recruitment of caspb, which is activated and cleaves the midformed il1b resulting in il1b maturation. Interacts (via pyrin domain) with NLP3X1 (via pyrin domain). Interacts with gbp4. In terms of tissue distribution, expressed in the kidney, intestine and gill. Expressed at low levels in the heart.

Its subcellular location is the cytoplasm. The protein localises to the inflammasome. Its function is as follows. Functions as a key mediator in apoptosis and inflammation. Promotes caspase-mediated apoptosis. Induces proteolytic processing of caspa and caspa-dependent apoptosis. Involved in innate immune response by acting as an integral adapter in the assembly of various inflammasomes which recruit and activate caspase-1 leading to processing and secretion of pro-inflammatory cytokines. Caspase-1-dependent inflammation leads to macrophage pyroptosis, a form of cell death. The function as activating adapter in different types of inflammasomes is mediated by the pyrin and CARD domains and their homotypic interactions. Clustered PYCARD nucleates the formation of caspase-1 filaments through the interaction of their respective CARD domains, acting as a platform for of caspase-1 polymerization. Also involved in transcriptional activation of cytokines and chemokines independent of the inflammasome. In Danio rerio (Zebrafish), this protein is Apoptosis-associated speck-like protein containing a CARD (pycard).